Consider the following 495-residue polypeptide: Cytochrome P450 Tp4149 (495 aa).

2 helical membrane passes run Ile4–Ile24 and Tyr208–Asp228. Residue Asn419 is glycosylated (N-linked (GlcNAc...) asparagine). Position 437 (Cys437) interacts with heme.

The protein belongs to the cytochrome P450 family. Requires heme as cofactor.

The protein resides in the membrane. The protein operates within secondary metabolite biosynthesis; terpenoid biosynthesis. Probably involved in the biosynthesis of germacrene-derived sesquiterpene lactones. This Tanacetum parthenium (Feverfew) protein is Cytochrome P450 Tp4149.